The chain runs to 573 residues: Probable pectinesterase/pectinesterase inhibitor 41 (573 aa).

Residues 1–22 (MLSLKLFLVTLFLSLQTLFIAS) form the signal peptide. The segment at 25–184 (LLPSNSSSTI…TKLFSVSLAL (160 aa)) is pectinesterase inhibitor 41. 7 N-linked (GlcNAc...) asparagine glycosylation sites follow: Asn29, Asn119, Asn173, Asn264, Asn268, Asn281, and Asn320. The segment at 259–557 (VTVNQNGTGN…FTVENFLLGD (299 aa)) is pectinesterase 41. Substrate is bound at residue Thr336. Residue Asn353 is glycosylated (N-linked (GlcNAc...) asparagine). Residue Gln366 participates in substrate binding. Residue Asp389 is the Proton donor; for pectinesterase activity of the active site. Cysteines 403 and 423 form a disulfide. Asp410 functions as the Nucleophile; for pectinesterase activity in the catalytic mechanism. N-linked (GlcNAc...) asparagine glycosylation is found at Asn456 and Asn469. Positions 478 and 480 each coordinate substrate. Residues Asn520, Asn541, and Asn547 are each glycosylated (N-linked (GlcNAc...) asparagine).

This sequence in the N-terminal section; belongs to the PMEI family. In the C-terminal section; belongs to the pectinesterase family. As to expression, expressed in flowers, siliques, floral stems and rosettes leaves.

The protein resides in the secreted. The protein localises to the cell wall. It carries out the reaction [(1-&gt;4)-alpha-D-galacturonosyl methyl ester](n) + n H2O = [(1-&gt;4)-alpha-D-galacturonosyl](n) + n methanol + n H(+). It functions in the pathway glycan metabolism; pectin degradation; 2-dehydro-3-deoxy-D-gluconate from pectin: step 1/5. In terms of biological role, acts in the modification of cell walls via demethylesterification of cell wall pectin. This chain is Probable pectinesterase/pectinesterase inhibitor 41 (PME41), found in Arabidopsis thaliana (Mouse-ear cress).